We begin with the raw amino-acid sequence, 188 residues long: Phosphoribosylglycinamide formyltransferase (188 aa).

A N(1)-(5-phospho-beta-D-ribosyl)glycinamide-binding site is contributed by 12-14; that stretch reads GSN. Residues lysine 66, 91–94, and asparagine 108 contribute to the (6R)-10-formyltetrahydrofolate site; that span reads MRLI. Residue histidine 110 is the Proton donor of the active site.

It belongs to the GART family.

It carries out the reaction N(1)-(5-phospho-beta-D-ribosyl)glycinamide + (6R)-10-formyltetrahydrofolate = N(2)-formyl-N(1)-(5-phospho-beta-D-ribosyl)glycinamide + (6S)-5,6,7,8-tetrahydrofolate + H(+). Its pathway is purine metabolism; IMP biosynthesis via de novo pathway; N(2)-formyl-N(1)-(5-phospho-D-ribosyl)glycinamide from N(1)-(5-phospho-D-ribosyl)glycinamide (10-formyl THF route): step 1/1. In terms of biological role, catalyzes the transfer of a formyl group from 10-formyltetrahydrofolate to 5-phospho-ribosyl-glycinamide (GAR), producing 5-phospho-ribosyl-N-formylglycinamide (FGAR) and tetrahydrofolate. The polypeptide is Phosphoribosylglycinamide formyltransferase (Staphylococcus aureus (strain MRSA252)).